The primary structure comprises 196 residues: dTTP/UTP pyrophosphatase (196 aa).

The active-site Proton acceptor is the Asp73.

Belongs to the Maf family. YhdE subfamily. It depends on a divalent metal cation as a cofactor.

It is found in the cytoplasm. It carries out the reaction dTTP + H2O = dTMP + diphosphate + H(+). It catalyses the reaction UTP + H2O = UMP + diphosphate + H(+). Functionally, nucleoside triphosphate pyrophosphatase that hydrolyzes dTTP and UTP. May have a dual role in cell division arrest and in preventing the incorporation of modified nucleotides into cellular nucleic acids. This chain is dTTP/UTP pyrophosphatase, found in Myxococcus xanthus (strain DK1622).